The chain runs to 510 residues: Ribonuclease Y (510 aa).

Residues 1-21 traverse the membrane as a helical segment; that stretch reads MLIYILSGLGVLVGALLGYVV. The region spanning 200–260 is the KH domain; that stretch reads TVSTIMLPND…LRREIAKRTI (61 aa). Residues 326–419 enclose the HD domain; it reads VLNHSIEVAL…VAAADALSAA (94 aa).

This sequence belongs to the RNase Y family.

It is found in the cell membrane. Functionally, endoribonuclease that initiates mRNA decay. This Thermosipho melanesiensis (strain DSM 12029 / CIP 104789 / BI429) protein is Ribonuclease Y.